The primary structure comprises 235 residues: Regulator of G-protein signaling 18 (235 aa).

S49 carries the post-translational modification Phosphoserine. The 117-residue stretch at 86–202 (SFDKLLSHRD…LKSEIYLHLI (117 aa)) folds into the RGS domain. Phosphoserine is present on residues S216 and S218.

It localises to the cytoplasm. Inhibits signal transduction by increasing the GTPase activity of G protein alpha subunits thereby driving them into their inactive GDP-bound form. Binds to G(i) alpha-1, G(i) alpha-2, G(i) alpha-3 and G(q) alpha. The chain is Regulator of G-protein signaling 18 (Rgs18) from Rattus norvegicus (Rat).